The following is a 117-amino-acid chain: Fluoride-specific ion channel FluC 2 (117 aa).

Helical transmembrane passes span 1 to 21 (MISIILVMIGGGFGAIARSAI) and 46 to 66 (FLIGLTIGLSISISWFPAFFV). Glycine 71 and threonine 74 together coordinate Na(+). A helical transmembrane segment spans residues 95 to 115 (LFLNYSLLQFIIGFIACYIGY).

This sequence belongs to the fluoride channel Fluc/FEX (TC 1.A.43) family.

The protein resides in the cell membrane. The enzyme catalyses fluoride(in) = fluoride(out). Its activity is regulated as follows. Na(+) is not transported, but it plays an essential structural role and its presence is essential for fluoride channel function. Fluoride-specific ion channel. Important for reducing fluoride concentration in the cell, thus reducing its toxicity. The chain is Fluoride-specific ion channel FluC 2 from Staphylococcus aureus (strain Mu50 / ATCC 700699).